Consider the following 412-residue polypeptide: Subtilisin-like protease 6 (412 aa).

Positions 1-20 are cleaved as a signal peptide; sequence MGFITKAIPIVLAALSTVNG. The propeptide occupies 21 to 126; sequence ARILEAGPHA…VVRTTTNGTN (106 aa). The region spanning 36–120 is the Inhibitor I9 domain; sequence KYIVVMKREV…FIEPDFVVRT (85 aa). Residues asparagine 123 and asparagine 126 are each glycosylated (N-linked (GlcNAc...) asparagine). The Peptidase S8 domain occupies 135–412; it reads SWGLARVGSK…GKLIYNGSGK (278 aa). Residues aspartate 167 and histidine 198 each act as charge relay system in the active site. 2 N-linked (GlcNAc...) asparagine glycosylation sites follow: asparagine 252 and asparagine 264. Serine 358 functions as the Charge relay system in the catalytic mechanism. The N-linked (GlcNAc...) asparagine glycan is linked to asparagine 408.

Belongs to the peptidase S8 family.

Its subcellular location is the secreted. Secreted subtilisin-like serine protease with keratinolytic activity that contributes to pathogenicity. In Trichophyton rubrum (Athlete's foot fungus), this protein is Subtilisin-like protease 6 (SUB6).